The chain runs to 533 residues: L-aspartate oxidase (533 aa).

FAD contacts are provided by residues 16 to 19 (SGAA), K38, 45 to 52 (ATFYAQGG), and D223. R290 serves as the catalytic Proton donor/acceptor. FAD-binding positions include E375 and 391-392 (SL).

Belongs to the FAD-dependent oxidoreductase 2 family. NadB subfamily. FAD is required as a cofactor.

The protein resides in the cytoplasm. The catalysed reaction is L-aspartate + O2 = iminosuccinate + H2O2. Its pathway is cofactor biosynthesis; NAD(+) biosynthesis; iminoaspartate from L-aspartate (oxidase route): step 1/1. Catalyzes the oxidation of L-aspartate to iminoaspartate, the first step in the de novo biosynthesis of NAD(+). The sequence is that of L-aspartate oxidase (nadB) from Yersinia pestis.